An 835-amino-acid polypeptide reads, in one-letter code: BCL11 transcription factor A (835 aa).

Positions 1-12 are enriched in basic residues; that stretch reads MSRRKQGKPQHL. The segment at 1–41 is disordered; that stretch reads MSRRKQGKPQHLSKREFSPEPLEAILTDDEPDHGPLGAPEG. The segment at 1–210 is required for nuclear body formation and for SUMO1 recruitment; the sequence is MSRRKQGKPQ…SEHGSPLTPR (210 aa). A C2HC-type zinc finger spans residues 45–71; that stretch reads LLTCGQCQMNFPLGDILIFIEHKRKQC. Residues Cys-48, Cys-51, His-66, and Cys-71 each contribute to the Zn(2+) site. Ser-86 is modified (phosphoserine). Glycyl lysine isopeptide (Lys-Gly) (interchain with G-Cter in SUMO2) cross-links involve residues Lys-123 and Lys-164. A C2H2-type 1 zinc finger spans residues 170-193; the sequence is YTCTTCKQPFTSAWFLLQHAQNTH. Ser-205 carries the phosphoserine modification. Arg-271 is modified (asymmetric dimethylarginine). The segment at 323–376 is disordered; that stretch reads AGNTSSPPLSPGRPSPMQRLLQPFQPGSKPPFLATPPLPPLQSAPPPSQPPVKS. 2 positions are modified to phosphoserine: Ser-332 and Ser-337. Positions 355–372 are enriched in pro residues; sequence LATPPLPPLQSAPPPSQP. 2 consecutive C2H2-type zinc fingers follow at residues 377 to 399 and 405 to 429; these read KSCE…RRSH and YKCN…THMH. Positions 421–430 are enriched in basic residues; the sequence is KRHMKTHMHK. 3 disordered regions span residues 421–458, 471–512, and 572–619; these read KRHM…LVGS, KSEN…ERVD, and RGHL…GLSK. The span at 441-450 shows a compositional bias: polar residues; that stretch reads GLSTASSPEP. Phosphoserine occurs at positions 446 and 447. A compositionally biased stretch (acidic residues) spans 482 to 506; the sequence is NGDEEEEEDDEEEEEEEEEEEEELT. The segment covering 574–584 has biased composition (basic and acidic residues); it reads HLAEAEGHRDT. Ser-608 is subject to Phosphoserine. Lys-620 is covalently cross-linked (Glycyl lysine isopeptide (Lys-Gly) (interchain with G-Cter in SUMO2)). Residues Ser-625 and Ser-630 each carry the phosphoserine modification. A Glycyl lysine isopeptide (Lys-Gly) (interchain with G-Cter in SUMO1) cross-link involves residue Lys-634. Residues 678–740 form a disordered region; sequence DSRQSPFASS…GRPSSKEGRR (63 aa). Over residues 682 to 696 the composition is skewed to low complexity; that stretch reads SPFASSSEHSSENGS. Thr-701 carries the post-translational modification Phosphothreonine. Residues 706–720 are compositionally biased toward gly residues; sequence LDGGISGRSGTGSGG. Residues 737 to 835 form a DNA-binding region; it reads EGRRSDTCEY…RVLNNDIKTE (99 aa). Residues 742–764 form a C2H2-type 4 zinc finger; that stretch reads DTCEYCGKVFKNCSNLTVHRRSH. Residues Cys-744, Cys-747, His-760, and His-764 each coordinate Zn(2+). A disordered region spans residues 765 to 769; sequence TGERP. The C2H2-type 5 zinc finger occupies 770 to 792; sequence YKCELCNYACAQSSKLTRHMKTH. The Zn(2+) site is built by Cys-772, Cys-775, His-788, and His-792. Positions 793–799 are disordered; the sequence is GQVGKDV. The segment at 800-823 adopts a C2H2-type 6 zinc-finger fold; the sequence is YKCEICKMPFSVYSTLEKHMKKWH. Positions 802, 805, 818, and 823 each coordinate Zn(2+). Lys-833 is covalently cross-linked (Glycyl lysine isopeptide (Lys-Gly) (interchain with G-Cter in SUMO2)).

In terms of assembly, homotetrameric; self-associates via C2HC-type zinc finger domain. Interacts with MTA2, a component of the nucleosome remodeling and deacetylase (NuRD) repressor complex. Interacts (via its C2H2-type zinc finger domains 4, 5 and 6) with promoter region of gamma-globulin. Interacts with NR2F1, PIAS3, NR2F2 and NR2F6. Isoform 1, isoform 2 and isoform 3 form homodimers and heterodimers. Isoform 2 interacts with TBR1. Sumoylated with SUMO1. Expressed at high levels in brain, spleen thymus, bone marrow and testis. Expressed in CD34-positive myeloid precursor cells, B-cells, monocytes and megakaryocytes. Expression is tightly regulated during B-cell development. In terms of tissue distribution, expressed in fetal and adult brain, and in the plasmacytoid dendritic cell.

It is found in the cytoplasm. Its subcellular location is the nucleus. The protein resides in the chromosome. The protein localises to the nucleus matrix. Its function is as follows. Transcription factor. Associated with the BAF SWI/SNF chromatin remodeling complex. Binds to the 5'-TGACCA-3' sequence motif in regulatory regions of target genes, including a distal promoter of the HBG1 hemoglobin subunit gamma-1 gene. Involved in regulation of the developmental switch from gamma- to beta-globin, probably via direct repression of HBG1; hence indirectly repressing fetal hemoglobin (HbF) level. Involved in brain development. May play a role in hematopoiesis. Essential factor in lymphopoiesis required for B-cell formation in fetal liver. May function as a modulator of the transcriptional repression activity of NR2F2. This is BCL11 transcription factor A (BCL11A) from Homo sapiens (Human).